The primary structure comprises 64 residues: MAEDKFEQAKGNLKETVGNVTDNKDLEKEGQNDKASGKAKEAVENVKNKANDLIDKVKGNNDNK.

The segment at 1–64 is disordered; that stretch reads MAEDKFEQAK…DKVKGNNDNK (64 aa). Residues 22–64 are compositionally biased toward basic and acidic residues; sequence DNKDLEKEGQNDKASGKAKEAVENVKNKANDLIDKVKGNNDNK.

It belongs to the UPF0337 (CsbD) family.

The sequence is that of UPF0337 protein SH2043 from Staphylococcus haemolyticus (strain JCSC1435).